Reading from the N-terminus, the 450-residue chain is Tubulin alpha-4 chain (450 aa).

Gln11 serves as a coordination point for GTP. Lys40 carries the post-translational modification N6-acetyllysine. Positions 71, 144, 145, 179, 206, and 228 each coordinate GTP. Position 71 (Glu71) interacts with Mg(2+). Glu254 is an active-site residue. The interval 431 to 450 is disordered; it reads DYEEVGAESGEGDEGDEEEY.

Belongs to the tubulin family. As to quaternary structure, dimer of alpha and beta chains. A typical microtubule is a hollow water-filled tube with an outer diameter of 25 nm and an inner diameter of 15 nM. Alpha-beta heterodimers associate head-to-tail to form protofilaments running lengthwise along the microtubule wall with the beta-tubulin subunit facing the microtubule plus end conferring a structural polarity. Microtubules usually have 13 protofilaments but different protofilament numbers can be found in some organisms and specialized cells. It depends on Mg(2+) as a cofactor. Post-translationally, undergoes a tyrosination/detyrosination cycle, the cyclic removal and re-addition of a C-terminal tyrosine residue by the enzymes tubulin tyrosine carboxypeptidase (TTCP) and tubulin tyrosine ligase (TTL), respectively. In terms of processing, acetylation of alpha chains at Lys-40 stabilizes microtubules and affects affinity and processivity of microtubule motors. This modification has a role in multiple cellular functions, ranging from cell motility, cell cycle progression or cell differentiation to intracellular trafficking and signaling.

The protein resides in the cytoplasm. Its subcellular location is the cytoskeleton. It carries out the reaction GTP + H2O = GDP + phosphate + H(+). Tubulin is the major constituent of microtubules, a cylinder consisting of laterally associated linear protofilaments composed of alpha- and beta-tubulin heterodimers. Microtubules grow by the addition of GTP-tubulin dimers to the microtubule end, where a stabilizing cap forms. Below the cap, tubulin dimers are in GDP-bound state, owing to GTPase activity of alpha-tubulin. This is Tubulin alpha-4 chain from Gossypium hirsutum (Upland cotton).